The primary structure comprises 447 residues: N-succinylarginine dihydrolase (447 aa).

Substrate-binding positions include 19 to 28, Asn-110, and 137 to 138; these read AGLSFGNEAS and HR. Glu-174 is a catalytic residue. Residue Arg-212 participates in substrate binding. His-248 is a catalytic residue. 2 residues coordinate substrate: Asp-250 and Asn-359. Cys-365 functions as the Nucleophile in the catalytic mechanism.

It belongs to the succinylarginine dihydrolase family. Homodimer.

It catalyses the reaction N(2)-succinyl-L-arginine + 2 H2O + 2 H(+) = N(2)-succinyl-L-ornithine + 2 NH4(+) + CO2. It participates in amino-acid degradation; L-arginine degradation via AST pathway; L-glutamate and succinate from L-arginine: step 2/5. Functionally, catalyzes the hydrolysis of N(2)-succinylarginine into N(2)-succinylornithine, ammonia and CO(2). The sequence is that of N-succinylarginine dihydrolase from Salmonella typhimurium (strain LT2 / SGSC1412 / ATCC 700720).